The following is a 1877-amino-acid chain: Protein TIC 214 (1877 aa).

6 consecutive transmembrane segments (helical) span residues 18 to 38 (IINS…FSVG), 64 to 84 (FITG…HLAL), 87 to 107 (PHTI…WKNH), 124 to 144 (LSIQ…HFIL), 172 to 192 (VGWL…LFWI), and 221 to 241 (IFRI…PSPI). 3 disordered regions span residues 246–313 (LKET…GKEK), 644–695 (DDFE…NSDR), and 774–795 (PEFK…QKKE). 3 stretches are compositionally biased toward acidic residues: residues 251–268 (ETEE…EIET), 281–304 (GSTE…DETE), and 645–659 (DFEE…ESTE). Residues 685–695 (TSTKDTTNSDR) show a composition bias toward basic and acidic residues.

The protein belongs to the TIC214 family. In terms of assembly, part of the Tic complex.

It localises to the plastid. The protein localises to the chloroplast inner membrane. Functionally, involved in protein precursor import into chloroplasts. May be part of an intermediate translocation complex acting as a protein-conducting channel at the inner envelope. The polypeptide is Protein TIC 214 (Chloranthus spicatus (Chulantree)).